The chain runs to 269 residues: Formamidopyrimidine-DNA glycosylase (269 aa).

Proline 2 serves as the catalytic Schiff-base intermediate with DNA. Residue glutamate 3 is the Proton donor of the active site. The active-site Proton donor; for beta-elimination activity is lysine 57. Residues histidine 90, arginine 109, and lysine 150 each contribute to the DNA site. An FPG-type zinc finger spans residues 235 to 269 (QVYGRAGEPCRQCGHPIEIAKHGQRSTFFCRHCQH). Arginine 259 functions as the Proton donor; for delta-elimination activity in the catalytic mechanism.

It belongs to the FPG family. As to quaternary structure, monomer. The cofactor is Zn(2+).

The catalysed reaction is Hydrolysis of DNA containing ring-opened 7-methylguanine residues, releasing 2,6-diamino-4-hydroxy-5-(N-methyl)formamidopyrimidine.. It carries out the reaction 2'-deoxyribonucleotide-(2'-deoxyribose 5'-phosphate)-2'-deoxyribonucleotide-DNA = a 3'-end 2'-deoxyribonucleotide-(2,3-dehydro-2,3-deoxyribose 5'-phosphate)-DNA + a 5'-end 5'-phospho-2'-deoxyribonucleoside-DNA + H(+). Involved in base excision repair of DNA damaged by oxidation or by mutagenic agents. Acts as a DNA glycosylase that recognizes and removes damaged bases. Has a preference for oxidized purines, such as 7,8-dihydro-8-oxoguanine (8-oxoG). Has AP (apurinic/apyrimidinic) lyase activity and introduces nicks in the DNA strand. Cleaves the DNA backbone by beta-delta elimination to generate a single-strand break at the site of the removed base with both 3'- and 5'-phosphates. This is Formamidopyrimidine-DNA glycosylase from Yersinia pseudotuberculosis serotype O:1b (strain IP 31758).